Consider the following 289-residue polypeptide: BTB/POZ domain-containing protein KCTD7 (289 aa).

Positions 1-42 are disordered; sequence MVVVTGREPDSRHSDGAMSSSEAEDDFLEPATPTATQAGHGL. The region spanning 53–141 is the BTB domain; it reads VPLNIGGAHF…YAIGPLLEQL (89 aa).

Interacts with CUL3. In terms of tissue distribution, high expression in brain, particularly in post-mitotic neurons. Expressed in the mitral cells of the olfactory bulbs, the hippocampus, the deep layers of the cerebral cortex and Purkinje cells of the cerebellum. Not detected in astrocytes or microglial cells. Also expressed in heart, liver, spleen and kidney.

Its subcellular location is the cell membrane. It is found in the cytoplasm. The protein localises to the cytosol. Functionally, may be involved in the control of excitability of cortical neurons. This chain is BTB/POZ domain-containing protein KCTD7 (Kctd7), found in Mus musculus (Mouse).